The primary structure comprises 764 residues: 5-methyltetrahydropteroyltriglutamate--homocysteine methyltransferase (764 aa).

5-methyltetrahydropteroyltri-L-glutamate is bound by residues 16-19 (RELK) and K121. Residues 440-442 (IGS) and E493 contribute to the L-homocysteine site. Residues 440 to 442 (IGS) and E493 each bind L-methionine. Residues 524–525 (RC) and W570 contribute to the 5-methyltetrahydropteroyltri-L-glutamate site. D608 serves as a coordination point for L-homocysteine. D608 contributes to the L-methionine binding site. E614 lines the 5-methyltetrahydropteroyltri-L-glutamate pocket. Zn(2+) is bound by residues H650, C652, and E674. The Proton donor role is filled by H703. A Zn(2+)-binding site is contributed by C735.

This sequence belongs to the vitamin-B12 independent methionine synthase family. Zn(2+) serves as cofactor.

It carries out the reaction 5-methyltetrahydropteroyltri-L-glutamate + L-homocysteine = tetrahydropteroyltri-L-glutamate + L-methionine. Its pathway is amino-acid biosynthesis; L-methionine biosynthesis via de novo pathway; L-methionine from L-homocysteine (MetE route): step 1/1. Functionally, catalyzes the transfer of a methyl group from 5-methyltetrahydrofolate to homocysteine resulting in methionine formation. The polypeptide is 5-methyltetrahydropteroyltriglutamate--homocysteine methyltransferase (Burkholderia cenocepacia (strain ATCC BAA-245 / DSM 16553 / LMG 16656 / NCTC 13227 / J2315 / CF5610) (Burkholderia cepacia (strain J2315))).